The primary structure comprises 378 residues: Alginate lyase (378 aa).

The signal sequence occupies residues 1–28 (MQTPKLIRPTLLSMAIVSSMAWATGASA). Substrate contacts are provided by residues 67–68 (SK), 140–141 (HT), and Tyr-258.

Belongs to the polysaccharide lyase 5 family.

It localises to the periplasm. The catalysed reaction is Eliminative cleavage of alginate to give oligosaccharides with 4-deoxy-alpha-L-erythro-hex-4-enuronosyl groups at their non-reducing ends and beta-D-mannuronate at their reducing end.. Its function is as follows. Catalyzes the depolymerization of alginate by cleaving the beta-1,4 glycosidic bond between two adjacent sugar residues via a beta-elimination mechanism. May serve to degrade mislocalized alginate that is trapped in the periplasmic space. The chain is Alginate lyase from Pseudomonas syringae pv. tomato (strain ATCC BAA-871 / DC3000).